Reading from the N-terminus, the 249-residue chain is uncharacterized protein (249 aa).

Positions 1-43 (MRRGRSRPAGAAPAALLLPLLLLLPLTGCDRLAAAPAEHAAAA) are cleaved as a signal peptide. Positions 40 to 59 (AAAAGDPAQDADRGRRLPPV) are disordered. A NodB homology domain is found at 68–243 (PVVFLTYDDG…TIEEQGLRVG (176 aa)).

This is an uncharacterized protein from Streptomyces coelicolor (strain ATCC BAA-471 / A3(2) / M145).